The primary structure comprises 362 residues: Abnormal cell migration protein 13 (362 aa).

The N-terminal stretch at 1–20 (MTKLLIALILFSICWKPYSA) is a signal peptide. At 21–237 (EPIASFFDGL…ELDPLTTVSG (217 aa)) the chain is on the extracellular side. 2 disulfides stabilise this stretch: Cys36–Cys68 and Cys98–Cys136. The CUB domain occupies 36–175 (CKARLDRRLT…KGFKLHWGSF (140 aa)). An N-linked (GlcNAc...) asparagine glycan is attached at Asn63. Residues Asn145 and Asn161 are each glycosylated (N-linked (GlcNAc...) asparagine). The region spanning 182–225 (NCVTGEFSCGNGECIPIESACDRFADCSNGEDLIHSRQMAANCQ) is the LDL-receptor class A domain. 3 disulfides stabilise this stretch: Cys183–Cys195, Cys190–Cys208, and Cys202–Cys224. A helical transmembrane segment spans residues 238 to 258 (VFVLLFSATIILSLCGFIMFV). Topologically, residues 259–362 (CCLCKCLKST…VRNDVHRNLL (104 aa)) are cytoplasmic. The interval 275–311 (SSHTTTTTATDYKPDPPQFYPPSPPKMPPPSAASSYT) is disordered. Over residues 289–305 (DPPQFYPPSPPKMPPPS) the composition is skewed to pro residues.

As to quaternary structure, interacts with abl-1 (via SH2 and SH3 domains); the interaction is direct. Interacts with sem-5; the interaction is direct. As to expression, expressed in pharyngeal-intestinal valve cells and ventral cord neurons.

It localises to the cell membrane. The protein localises to the perikaryon. Its subcellular location is the cell projection. The protein resides in the axon. It is found in the dendrite. In terms of biological role, probable receptor that acts as an upstream signaling protein to promote the guidance, migration and positioning of the right Q neuroblast (QR) and its descendants along the anteroposterior body axis, and also the anterior migration of BDU interneurons during larval development. Associates with and recruits the downstream components tyrosine kinase abl-1 and the tyrosine kinase adapter protein sem-5 to the leading edge of migrating Q neuroblasts and their descendants to activate signaling through the two parallel wve-1 and wsp-1 pathways, respectively, and direct migration along the anteroposterior body axis. Involved in cytoskeleton dynamics regulating the organization of the actin cytoskeleton at the leading edge of migrating cells to ensure correct Q cell polarity and promote migration. Role in cytoskeleton organization may be by activation of the wve-1 and wsp-1 pathways which recruit the Arp2/3 complex to the leading edge of migrating cells. Plays a role in regulating the asymmetric distribution of the actin cytoskeleton-binding protein cor-1 in Q neuroblasts which is required for the anterior migration of QR neuroblasts. The polypeptide is Abnormal cell migration protein 13 (Caenorhabditis elegans).